The sequence spans 257 residues: Type III pantothenate kinase (257 aa).

7–14 is an ATP binding site; it reads DIGNSHTV. 106 to 109 provides a ligand contact to substrate; it reads GTDR. Asp108 (proton acceptor) is an active-site residue. Position 128 (Asp128) interacts with K(+). Position 132 (Thr132) interacts with ATP. Thr184 is a substrate binding site.

It belongs to the type III pantothenate kinase family. As to quaternary structure, homodimer. NH4(+) serves as cofactor. The cofactor is K(+).

It is found in the cytoplasm. It carries out the reaction (R)-pantothenate + ATP = (R)-4'-phosphopantothenate + ADP + H(+). It participates in cofactor biosynthesis; coenzyme A biosynthesis; CoA from (R)-pantothenate: step 1/5. Catalyzes the phosphorylation of pantothenate (Pan), the first step in CoA biosynthesis. The chain is Type III pantothenate kinase from Nocardioides sp. (strain ATCC BAA-499 / JS614).